A 41-amino-acid chain; its full sequence is Augerpeptide hhe6.1 (41 aa).

3 cysteine pairs are disulfide-bonded: cysteine 11–cysteine 32, cysteine 18–cysteine 35, and cysteine 31–cysteine 40.

Expressed by the venom duct.

The protein localises to the secreted. This chain is Augerpeptide hhe6.1, found in Hastula hectica (Sea snail).